Reading from the N-terminus, the 443-residue chain is 23S rRNA (uracil(1939)-C(5))-methyltransferase RlmD (443 aa).

The region spanning 10 to 68 (RVTTKQTLTVTVNSLDPFGQGVAHHQGKAIFIPGALPGEQAEIELTEQKRQYSRGKLKR) is the TRAM domain. Positions 81, 87, 90, and 168 each coordinate [4Fe-4S] cluster. Residues Gln-271, Phe-300, Asn-305, Glu-321, Asn-348, and Asp-369 each contribute to the S-adenosyl-L-methionine site. Cys-395 (nucleophile) is an active-site residue.

Belongs to the class I-like SAM-binding methyltransferase superfamily. RNA M5U methyltransferase family. RlmD subfamily.

The enzyme catalyses uridine(1939) in 23S rRNA + S-adenosyl-L-methionine = 5-methyluridine(1939) in 23S rRNA + S-adenosyl-L-homocysteine + H(+). Functionally, catalyzes the formation of 5-methyl-uridine at position 1939 (m5U1939) in 23S rRNA. This chain is 23S rRNA (uracil(1939)-C(5))-methyltransferase RlmD, found in Yersinia enterocolitica serotype O:8 / biotype 1B (strain NCTC 13174 / 8081).